The chain runs to 894 residues: Exocyst complex component 2 (894 aa).

The region spanning 5-89 (PVVTGLSPKE…GTSTVQFRAY (85 aa)) is the IPT/TIG domain. A compositionally biased stretch (basic and acidic residues) spans 398–413 (HTSKDSGAQEKAKNRD). Residues 398–417 (HTSKDSGAQEKAKNRDSSQA) form a disordered region.

The protein belongs to the SEC5 family. In terms of assembly, the exocyst complex is composed of Sec3/Exoc1, Sec5/Exoc2, Sec6/Exoc3, Sec8/Exoc4, Sec10/Exoc5, Sec15/Exoc6, Exo70/Exoc7 and Exo84/Exoc8.

Component of the exocyst complex involved in the docking of exocytic vesicles with fusion sites on the plasma membrane. The chain is Exocyst complex component 2 from Drosophila melanogaster (Fruit fly).